Reading from the N-terminus, the 336-residue chain is Protein-glutamate methylesterase/protein-glutamine glutaminase 1 (336 aa).

One can recognise a Response regulatory domain in the interval 2–119 (KIAIVNDMPL…GNPQEAAAPL (118 aa)). Asp-53 carries the 4-aspartylphosphate modification. Residues 147-336 (TASRQRLVAI…APRLLEIFPK (190 aa)) form the CheB-type methylesterase domain. Residues Ser-159, His-186, and Asp-279 contribute to the active site.

Belongs to the CheB family. Phosphorylated by CheA. Phosphorylation of the N-terminal regulatory domain activates the methylesterase activity.

The protein localises to the cytoplasm. It catalyses the reaction [protein]-L-glutamate 5-O-methyl ester + H2O = L-glutamyl-[protein] + methanol + H(+). It carries out the reaction L-glutaminyl-[protein] + H2O = L-glutamyl-[protein] + NH4(+). Functionally, involved in chemotaxis. Part of a chemotaxis signal transduction system that modulates chemotaxis in response to various stimuli. Catalyzes the demethylation of specific methylglutamate residues introduced into the chemoreceptors (methyl-accepting chemotaxis proteins or MCP) by CheR. Also mediates the irreversible deamidation of specific glutamine residues to glutamic acid. This Pseudomonas fluorescens (strain Pf0-1) protein is Protein-glutamate methylesterase/protein-glutamine glutaminase 1.